Here is a 444-residue protein sequence, read N- to C-terminus: Pentatricopeptide repeat-containing protein At4g35850, mitochondrial (444 aa).

The N-terminal 25 residues, 1 to 25 (MKFLMQSISGRNRSLVRALVSRRYF), are a transit peptide targeting the mitochondrion. PPR repeat units follow at residues 40–74 (DLSEYNTAVNSVTAQRRHYLLRDVYDDMKLDGVQP), 75–109 (TADIFHSFVVGTMKGARLSDAFFFREEMKAMGIAP), 110–144 (DVNLYNFLISTCGKCKNGKEAIRVYDEMKRYDVKP), 145–179 (NGQTFVCLLNACAVSGQLDLVYAIVRDMTAAGVGL), 255–289 (NLTVYHVAFSALADLKDVKATEALLEMLKKDGKDT), and 290–325 (DTYCMLQIMRCYLHSQDFENGLKLFQDYMSADKIPA).

It belongs to the PPR family. P subfamily.

The protein resides in the mitochondrion. This chain is Pentatricopeptide repeat-containing protein At4g35850, mitochondrial, found in Arabidopsis thaliana (Mouse-ear cress).